The chain runs to 1120 residues: Isoleucine--tRNA ligase (1120 aa).

The short motif at 64–74 (PFANGLPHYGH) is the 'HIGH' region element. The short motif at 647–651 (KLSKR) is the 'KMSKS' region element. Lys-650 contributes to the ATP binding site.

The protein belongs to the class-I aminoacyl-tRNA synthetase family. IleS type 2 subfamily. Monomer. The cofactor is Zn(2+).

The protein localises to the cytoplasm. It carries out the reaction tRNA(Ile) + L-isoleucine + ATP = L-isoleucyl-tRNA(Ile) + AMP + diphosphate. Its function is as follows. Catalyzes the attachment of isoleucine to tRNA(Ile). As IleRS can inadvertently accommodate and process structurally similar amino acids such as valine, to avoid such errors it has two additional distinct tRNA(Ile)-dependent editing activities. One activity is designated as 'pretransfer' editing and involves the hydrolysis of activated Val-AMP. The other activity is designated 'posttransfer' editing and involves deacylation of mischarged Val-tRNA(Ile). This is Isoleucine--tRNA ligase from Ehrlichia canis (strain Jake).